The primary structure comprises 381 residues: Succinyl-diaminopimelate desuccinylase (381 aa).

Residue His-69 participates in Zn(2+) binding. Asp-71 is an active-site residue. Asp-103 lines the Zn(2+) pocket. Glu-137 (proton acceptor) is an active-site residue. Positions 138, 166, and 355 each coordinate Zn(2+).

This sequence belongs to the peptidase M20A family. DapE subfamily. As to quaternary structure, homodimer. Zn(2+) is required as a cofactor. The cofactor is Co(2+).

It carries out the reaction N-succinyl-(2S,6S)-2,6-diaminopimelate + H2O = (2S,6S)-2,6-diaminopimelate + succinate. The protein operates within amino-acid biosynthesis; L-lysine biosynthesis via DAP pathway; LL-2,6-diaminopimelate from (S)-tetrahydrodipicolinate (succinylase route): step 3/3. In terms of biological role, catalyzes the hydrolysis of N-succinyl-L,L-diaminopimelic acid (SDAP), forming succinate and LL-2,6-diaminopimelate (DAP), an intermediate involved in the bacterial biosynthesis of lysine and meso-diaminopimelic acid, an essential component of bacterial cell walls. This Rickettsia africae (strain ESF-5) protein is Succinyl-diaminopimelate desuccinylase.